Here is a 421-residue protein sequence, read N- to C-terminus: UPF0415 protein C7orf25 homolog (421 aa).

This sequence belongs to the UPF0415 family.

This is UPF0415 protein C7orf25 homolog from Rattus norvegicus (Rat).